The primary structure comprises 293 residues: Signal recognition particle receptor FtsY (293 aa).

GTP-binding positions include 93–100 (GVNGAGKT), 175–179 (DTAGR), and 239–242 (TKLD).

It belongs to the GTP-binding SRP family. FtsY subfamily. In terms of assembly, part of the signal recognition particle protein translocation system, which is composed of SRP and FtsY. SRP is a ribonucleoprotein composed of Ffh and a 4.5S RNA molecule.

The protein resides in the cell inner membrane. The protein localises to the cytoplasm. It carries out the reaction GTP + H2O = GDP + phosphate + H(+). Its function is as follows. Involved in targeting and insertion of nascent membrane proteins into the cytoplasmic membrane. Acts as a receptor for the complex formed by the signal recognition particle (SRP) and the ribosome-nascent chain (RNC). Interaction with SRP-RNC leads to the transfer of the RNC complex to the Sec translocase for insertion into the membrane, the hydrolysis of GTP by both Ffh and FtsY, and the dissociation of the SRP-FtsY complex into the individual components. This chain is Signal recognition particle receptor FtsY, found in Helicobacter pylori (strain ATCC 700392 / 26695) (Campylobacter pylori).